The primary structure comprises 265 residues: Ubiquinone biosynthesis protein COQ4 homolog, mitochondrial (265 aa).

The transit peptide at 1 to 30 directs the protein to the mitochondrion; the sequence is MMQRSWQSWRRGLTLGLASRRSYVASVEAP. Residues histidine 170, aspartate 171, histidine 174, and glutamate 186 each coordinate Zn(2+).

The protein belongs to the COQ4 family. Component of a multi-subunit COQ enzyme complex. Requires Zn(2+) as cofactor.

The protein localises to the mitochondrion inner membrane. It carries out the reaction a 4-hydroxy-3-methoxy-5-(all-trans-polyprenyl)benzoate + H(+) = a 2-methoxy-6-(all-trans-polyprenyl)phenol + CO2. It functions in the pathway cofactor biosynthesis; ubiquinone biosynthesis. Its function is as follows. Lyase that catalyzes the C1-decarboxylation of 4-hydroxy-3-methoxy-5-(all-trans-polyprenyl)benzoic acid into 2-methoxy-6-(all-trans-polyprenyl)phenol during ubiquinone biosynthesis. This Drosophila virilis (Fruit fly) protein is Ubiquinone biosynthesis protein COQ4 homolog, mitochondrial.